A 130-amino-acid polypeptide reads, in one-letter code: Capsid protein (130 aa).

Positions Glu-31 to Ile-104 are viral RNA-binding.

Belongs to the Leviviricetes capsid protein family. As to quaternary structure, homodimer. The capsid proteins form dimers that assemble by group of 5. Twelve such pentamers are linked together with free dimers. The homodimers binds to the viral RNA via an operator hairpin, but also to many other RNA sequences in the viral genome; this interaction probably shifts the virus from the replicative to the assembly phase and ensures specific encapsidation of the viral genome.

The protein localises to the virion. Its function is as follows. Capsid protein self-assembles to form an icosahedral capsid with a T=3 symmetry, about 26 nm in diameter, and consisting of 89 capsid proteins dimers (178 capsid proteins). Involved in viral genome encapsidation through the interaction between a capsid protein dimer and the multiple packaging signals present in the RNA genome. The capsid also contains 1 copy of the A2 maturation protein. Functionally, acts as a translational repressor of viral replicase synthesis late in infection. This latter function is the result of capsid protein interaction with an RNA hairpin which contains the replicase ribosome-binding site. The chain is Capsid protein from Escherichia coli (Bacteriophage JP34).